Reading from the N-terminus, the 242-residue chain is MSTSTPTSTALIGSTGLVGSHILSTLLTSPTTSSQVQTISRRAPANPTNSSRLSPTVNADTSTWPTLLSSLVPLPTTVISSLGTTRVAAGGIANQWKIDHDLNVDLAKAAKQAGVKNFVFISSAGTRGALSTKVPYSQMKRGVEDTIQSLDFEHGIILRPGLILGEREKAQHAGQGLLYGLVRGLGRWVSLGVQDRFAQEAEVIARAAVKAAKMAEEGKAPGKWWVLEQDEIVKLGREEWKE.

A mitochondrion-targeting transit peptide spans 1 to 87 (MSTSTPTSTA…VISSLGTTRV (87 aa)). A disordered region spans residues 33-58 (SSQVQTISRRAPANPTNSSRLSPTVN). Positions 35-58 (QVQTISRRAPANPTNSSRLSPTVN) are enriched in polar residues.

This sequence belongs to the FMP52 family.

It localises to the mitochondrion outer membrane. This chain is Protein fmp-52, mitochondrial (fmp-52), found in Neurospora crassa (strain ATCC 24698 / 74-OR23-1A / CBS 708.71 / DSM 1257 / FGSC 987).